The primary structure comprises 687 residues: Dictomallein (687 aa).

Disordered regions lie at residues 1–45 (MGNG…SRRL) and 73–112 (TAGG…STSA). In terms of domain architecture, Peptidase M66 spans 233–501 (PVFGTDADVQ…QAWIASRVLA (269 aa)). H393 provides a ligand contact to Zn(2+). The active site involves E394. Zn(2+) contacts are provided by H397 and H403.

It belongs to the dictomallein family. Zn(2+) serves as cofactor.

In Burkholderia pseudomallei (strain 668), this protein is Dictomallein (dtmL).